Here is a 219-residue protein sequence, read N- to C-terminus: Endo-type membrane-bound lytic murein transglycosylase A-like protein (219 aa).

This sequence belongs to the transglycosylase Slt family.

The catalysed reaction is Endolytic cleavage of the (1-&gt;4)-beta-glycosidic linkage between N-acetylmuramic acid (MurNAc) and N-acetylglucosamine (GlcNAc) residues in peptidoglycan with concomitant formation of a 1,6-anhydrobond in the MurNAc residue.. Functionally, murein-degrading enzyme. May play a role in recycling of muropeptides during cell elongation and/or cell division (Potential). This chain is Endo-type membrane-bound lytic murein transglycosylase A-like protein, found in Shigella flexneri.